The primary structure comprises 334 residues: Methionyl-tRNA formyltransferase (334 aa).

111 to 114 (SLLP) lines the (6S)-5,6,7,8-tetrahydrofolate pocket.

This sequence belongs to the Fmt family.

The catalysed reaction is L-methionyl-tRNA(fMet) + (6R)-10-formyltetrahydrofolate = N-formyl-L-methionyl-tRNA(fMet) + (6S)-5,6,7,8-tetrahydrofolate + H(+). Its function is as follows. Attaches a formyl group to the free amino group of methionyl-tRNA(fMet). The formyl group appears to play a dual role in the initiator identity of N-formylmethionyl-tRNA by promoting its recognition by IF2 and preventing the misappropriation of this tRNA by the elongation apparatus. In Cyanothece sp. (strain PCC 7425 / ATCC 29141), this protein is Methionyl-tRNA formyltransferase.